The chain runs to 385 residues: Torsin-3A (385 aa).

An N-terminal signal peptide occupies residues 1-21 (MFLGALWLLLLLPLRPPGAQG). An N-linked (GlcNAc...) asparagine glycan is attached at N110. 155–162 (GWSGTGKN) provides a ligand contact to ATP.

It belongs to the ClpA/ClpB family. Torsin subfamily. In terms of assembly, interacts with TOR1AIP1. N-glycosylated.

The protein localises to the cytoplasm. Its subcellular location is the endoplasmic reticulum lumen. The sequence is that of Torsin-3A (Tor3a) from Mus musculus (Mouse).